Reading from the N-terminus, the 388-residue chain is Pepsin A-3 (388 aa).

An N-terminal signal peptide occupies residues 1-15; the sequence is MKWLLLLGLVALSEC. Residues 16–62 constitute a propeptide, activation peptide; sequence IMYKVPLIRKKSLRRTLSERGLLKDFLKKHNLNPARKYFPQWKAPTL. One can recognise a Peptidase A1 domain in the interval 76 to 385; the sequence is YFGTIGIGTP…DRANNQVGLA (310 aa). D94 is an active-site residue. Cystine bridges form between C107–C112 and C268–C272. Residue D277 is part of the active site. C311 and C344 are oxidised to a cystine.

Belongs to the peptidase A1 family.

The protein localises to the secreted. It catalyses the reaction Preferential cleavage: hydrophobic, preferably aromatic, residues in P1 and P1' positions. Cleaves 1-Phe-|-Val-2, 4-Gln-|-His-5, 13-Glu-|-Ala-14, 14-Ala-|-Leu-15, 15-Leu-|-Tyr-16, 16-Tyr-|-Leu-17, 23-Gly-|-Phe-24, 24-Phe-|-Phe-25 and 25-Phe-|-Tyr-26 bonds in the B chain of insulin.. Its function is as follows. Shows particularly broad specificity; although bonds involving phenylalanine and leucine are preferred, many others are also cleaved to some extent. In Homo sapiens (Human), this protein is Pepsin A-3 (PGA3).